The chain runs to 426 residues: MTFVEDFLSSYTFSYNPRNLETLLLGLGIKDTEGAKRAIRLGSDPKYFQVYMMYNDKAKLITRIMQFNADKYGMKLTFQNGLSVKLSPKVLAESVDDFFDMLDQWFIVSVEKDEIGVLVKSVKPVKPKTDVDIDEDFLKKVEAEVPLYIFLIASFGYKIPDKTTYNVYRDYILGRFIHLFRPSSNIPLHIAELSNRGTGKTTTFLIMRDFLGYYYTTEPPTLPFLVYDSKTKQQGIVATKNGIIFDEVQDWSGDRVKAILSVLDTGMENCTWNRSVSGSSETINRCIPIVFLGNENYISIDFYQAPSNLQQYIAEKSSMLEEVLLNKYPDIFPTKAFLDRFARIAVGNNFPSFTETITGKVLFPTILRKLIRELQKRIDRESPLNNDYEGRTRRRVEDVGQVLKGLGVDLDKPELVYAWTRFVGVQ.

This is an uncharacterized protein from Acidianus filamentous virus 1 (isolate United States/Yellowstone) (AFV-1).